We begin with the raw amino-acid sequence, 208 residues long: CASP-like protein 3A1 (208 aa).

2 stretches are compositionally biased toward polar residues: residues 1 to 11 (MGSFANGQNGS) and 17 to 33 (TPATGSNAALEPPTTSA). Residues 1–33 (MGSFANGQNGSELGIQTPATGSNAALEPPTTSA) are disordered. At 1–43 (MGSFANGQNGSELGIQTPATGSNAALEPPTTSAAAPRCPRLGM) the chain is on the cytoplasmic side. The helical transmembrane segment at 44-64 (AMVAARAAALVMALLSVSLMV) threads the bilayer. The Extracellular portion of the chain corresponds to 65 to 92 (SAKQRGTLAIFGIEIPLYAKWSLSDSLQ). Residues 93 to 113 (SLVGISAAAAAYSLAQLLSIA) traverse the membrane as a helical segment. At 114-128 (HTALKKAPVVPSRRY) the chain is on the cytoplasmic side. Residues 129–149 (AWMLLAGDQVFAYAMLSAGSA) traverse the membrane as a helical segment. At 150 to 183 (AAAVANLNRTGVRHTALPNFCKPLPRFCDLSAAS) the chain is on the extracellular side. A glycan (N-linked (GlcNAc...) asparagine) is linked at N157. A helical transmembrane segment spans residues 184-204 (IACAFLGCAFLAASAVIDVIW). Residues 205-208 (LSRL) are Cytoplasmic-facing.

The protein belongs to the Casparian strip membrane proteins (CASP) family. In terms of assembly, homodimer and heterodimers.

The protein resides in the cell membrane. This chain is CASP-like protein 3A1, found in Hordeum vulgare subsp. vulgare (Domesticated barley).